The sequence spans 589 residues: EZH inhibitory protein (589 aa).

Disordered stretches follow at residues 1-46 (MASS…LRLR), 61-548 (AGED…SGPN), and 561-589 (LDSS…KCRG). 2 stretches are compositionally biased toward gly residues: residues 29 to 38 (GPRGRGGPSG) and 105 to 114 (PKGGGKADQG). A compositionally biased stretch (low complexity) spans 147 to 161 (GAAGPPLPGARGSPA). A compositionally biased stretch (polar residues) spans 193–204 (LRSSTSQGSGST). 4 stretches are compositionally biased toward low complexity: residues 299 to 308 (RSSASAVSPE), 325 to 334 (RSSASVVSPE), 351 to 360 (RSSASVVSPE), and 374 to 390 (PRAT…TTRS). S306 is modified (phosphoserine). The span at 426–437 (MRLDLQVDREPE) shows a compositional bias: basic and acidic residues. Residues 438–449 (SEAEQEEQELES) are compositionally biased toward acidic residues. Residues 450-465 (EPGPSSRPQASRSSSR) show a composition bias toward low complexity. Positions 482–490 (RRPVRMRAS) are sufficient for interaction with EZH2. The interval 484–503 (PVRMRASSPSPPGRLYPLPK) is necessary and sufficient for inhibition of PRC2/EED-EZH1 and PRC2/EED-EZH2 complex activity. A compositionally biased stretch (low complexity) spans 509–547 (VHSPSSSSSESSSVSSSHSPLNKAPDPGSSPPLSSLSGP). The segment covering 575-589 (AAPHTREEEDKKCRG) has biased composition (basic and acidic residues).

In terms of assembly, interacts with PRC2/EED-EZH1 complex member EZH1 and with PRC2/EED-EZH2 complex member EZH2; the interaction blocks EZH1/EZH2 methyltransferase activity. Interacts (via C-terminus) with SUZ12 which is a member of the PRC2/EED-EZH1 and PRC2/EED-EZH2 complexes. Highly expressed in ovary with lower expression in testis and very low levels in other tissues tested including prostate, brain, kidney, spleen and liver. During spermatogenesis, expressed mainly in spermatogonia with very low expression in spermatocytes I and II.

The protein resides in the nucleus. Its subcellular location is the cytoplasm. Inhibits PRC2/EED-EZH1 and PRC2/EED-EZH2 complex function by inhibiting EZH1/EZH2 methyltransferase activity, thereby causing down-regulation of histone H3 trimethylation at 'Lys-27' (H3K27me3). Probably inhibits methyltransferase activity by limiting the stimulatory effect of cofactors such as AEBP2 and JARID2. Inhibits H3K27me3 deposition during spermatogenesis and oogenesis. This chain is EZH inhibitory protein, found in Mus musculus (Mouse).